The chain runs to 350 residues: MSNSWWLKPAQAIDVPMREAALARQQQLTKPAGSLAQLERLAVQLAGLQGRERPAVDQLWIAIFAADHGVVAEGVSAYPQEVTGQMLHNFVNGGAAISVLARQLSAQLDVVDLGTVSPMDLPGVRHLRIGAGTANFAHGPAMSVEQGLAALQAGRDSVLRAKAVGTELFIGGEMGIGNTTAASAVACSLLECAAPLLVGPGTGLNAEGIQHKTRVIERALALHAEQAGDPLNSLFCLGGFEIAALAGAYLACAQEGIAVLVDGFICSVAALVAVRLNPSCRNWLLFGHRGAEPGHRHLLETLQAEPLLDLGLRLGEGSGAALAVPLVRLACELHNGMATFAEAAVADRPA.

Glu-316 (proton acceptor) is an active-site residue.

Belongs to the CobT family.

The catalysed reaction is 5,6-dimethylbenzimidazole + nicotinate beta-D-ribonucleotide = alpha-ribazole 5'-phosphate + nicotinate + H(+). Its pathway is nucleoside biosynthesis; alpha-ribazole biosynthesis; alpha-ribazole from 5,6-dimethylbenzimidazole: step 1/2. Its function is as follows. Catalyzes the synthesis of alpha-ribazole-5'-phosphate from nicotinate mononucleotide (NAMN) and 5,6-dimethylbenzimidazole (DMB). This chain is Nicotinate-nucleotide--dimethylbenzimidazole phosphoribosyltransferase, found in Pseudomonas syringae pv. syringae (strain B728a).